We begin with the raw amino-acid sequence, 213 residues long: Thymidylate kinase (213 aa).

Residue 10–17 (GLEGAGKT) coordinates ATP.

Belongs to the thymidylate kinase family.

The enzyme catalyses dTMP + ATP = dTDP + ADP. Its function is as follows. Phosphorylation of dTMP to form dTDP in both de novo and salvage pathways of dTTP synthesis. The chain is Thymidylate kinase from Escherichia fergusonii (strain ATCC 35469 / DSM 13698 / CCUG 18766 / IAM 14443 / JCM 21226 / LMG 7866 / NBRC 102419 / NCTC 12128 / CDC 0568-73).